Consider the following 136-residue polypeptide: Small ribosomal subunit protein eS19 (136 aa).

K23 is modified (N6-acetyllysine). R67 carries the post-translational modification Omega-N-methylarginine. K111 and K115 each carry N6-acetyllysine. The segment at 116–136 is disordered; sequence DQDGGRKLTPQGQRDLDRIAG.

It belongs to the eukaryotic ribosomal protein eS19 family. In terms of assembly, component of the small ribosomal subunit. Part of the small subunit (SSU) processome, composed of more than 70 proteins and the RNA chaperone small nucleolar RNA (snoRNA) U3. Interacts with RPS19BP1; the interaction is direct and mediates the integration of RPS19 in state post-A1. Interacts with RPS19BP1.

Its subcellular location is the cytoplasm. The protein resides in the nucleus. It localises to the nucleolus. Its function is as follows. Component of the small ribosomal subunit. The ribosome is a large ribonucleoprotein complex responsible for the synthesis of proteins in the cell. Required for pre-rRNA processing and maturation of 40S ribosomal subunits. Part of the small subunit (SSU) processome, first precursor of the small eukaryotic ribosomal subunit. During the assembly of the SSU processome in the nucleolus, many ribosome biogenesis factors, an RNA chaperone and ribosomal proteins associate with the nascent pre-rRNA and work in concert to generate RNA folding, modifications, rearrangements and cleavage as well as targeted degradation of pre-ribosomal RNA by the RNA exosome. The sequence is that of Small ribosomal subunit protein eS19 (RPS19) from Sus scrofa (Pig).